The following is a 216-amino-acid chain: Small ribosomal subunit protein uS3 (216 aa).

The region spanning 38-106 is the KH type-2 domain; the sequence is LRKMLKDKLY…QANIEIKEVR (69 aa).

This sequence belongs to the universal ribosomal protein uS3 family. As to quaternary structure, part of the 30S ribosomal subunit. Forms a tight complex with proteins S10 and S14.

Binds the lower part of the 30S subunit head. Binds mRNA in the 70S ribosome, positioning it for translation. The chain is Small ribosomal subunit protein uS3 from Thermodesulfovibrio yellowstonii (strain ATCC 51303 / DSM 11347 / YP87).